A 131-amino-acid polypeptide reads, in one-letter code: Fumarate reductase subunit C (131 aa).

The next 3 membrane-spanning stretches (helical) occupy residues 30-50 (EGTA…LFAL), 63-83 (FLQN…ALLH), and 109-129 (IIKS…FVAL).

The protein belongs to the FrdC family. Part of an enzyme complex containing four subunits: a flavoprotein (FrdA), an iron-sulfur protein (FrdB), and two hydrophobic anchor proteins (FrdC and FrdD).

The protein resides in the cell inner membrane. Its function is as follows. Two distinct, membrane-bound, FAD-containing enzymes are responsible for the catalysis of fumarate and succinate interconversion; fumarate reductase is used in anaerobic growth, and succinate dehydrogenase is used in aerobic growth. Anchors the catalytic components of the fumarate reductase complex to the cell inner membrane, binds quinones. This chain is Fumarate reductase subunit C, found in Shigella dysenteriae serotype 1 (strain Sd197).